The primary structure comprises 774 residues: DNA ligase (774 aa).

Residues 36–40 (DAVYD), 85–86 (SL), and Glu161 contribute to the NAD(+) site. Residue Lys163 is the N6-AMP-lysine intermediate of the active site. NAD(+) contacts are provided by Arg184, Glu221, Lys341, and Lys365. Positions 459, 462, 477, and 482 each coordinate Zn(2+). The 82-residue stretch at 693–774 (VQSGLLRGKT…LLEALAVTGI (82 aa)) folds into the BRCT domain.

This sequence belongs to the NAD-dependent DNA ligase family. LigA subfamily. Requires Mg(2+) as cofactor. The cofactor is Mn(2+).

The catalysed reaction is NAD(+) + (deoxyribonucleotide)n-3'-hydroxyl + 5'-phospho-(deoxyribonucleotide)m = (deoxyribonucleotide)n+m + AMP + beta-nicotinamide D-nucleotide.. DNA ligase that catalyzes the formation of phosphodiester linkages between 5'-phosphoryl and 3'-hydroxyl groups in double-stranded DNA using NAD as a coenzyme and as the energy source for the reaction. It is essential for DNA replication and repair of damaged DNA. This Trichodesmium erythraeum (strain IMS101) protein is DNA ligase.